The primary structure comprises 363 residues: Flagellar P-ring protein (363 aa).

A signal peptide spans 1–20 (MKIKLILACALMVFSAASSA).

It belongs to the FlgI family. As to quaternary structure, the basal body constitutes a major portion of the flagellar organelle and consists of four rings (L,P,S, and M) mounted on a central rod.

It is found in the periplasm. Its subcellular location is the bacterial flagellum basal body. Functionally, assembles around the rod to form the L-ring and probably protects the motor/basal body from shearing forces during rotation. The protein is Flagellar P-ring protein of Shewanella loihica (strain ATCC BAA-1088 / PV-4).